A 190-amino-acid chain; its full sequence is 7-methyl-GTP pyrophosphatase (190 aa).

Catalysis depends on D69, which acts as the Proton acceptor.

Belongs to the Maf family. YceF subfamily. It depends on a divalent metal cation as a cofactor.

Its subcellular location is the cytoplasm. It carries out the reaction N(7)-methyl-GTP + H2O = N(7)-methyl-GMP + diphosphate + H(+). In terms of biological role, nucleoside triphosphate pyrophosphatase that hydrolyzes 7-methyl-GTP (m(7)GTP). May have a dual role in cell division arrest and in preventing the incorporation of modified nucleotides into cellular nucleic acids. This Xanthomonas axonopodis pv. citri (strain 306) protein is 7-methyl-GTP pyrophosphatase.